The following is a 565-amino-acid chain: Liver carboxylesterase 1 (565 aa).

Residues 1–18 (MWLCALSLISLTACLSLG) form the signal peptide. Residues cysteine 87 and cysteine 116 are joined by a disulfide bond. The active-site Acyl-ester intermediate is the serine 221. A disulfide bridge links cysteine 273 with cysteine 284. Catalysis depends on glutamate 353, which acts as the Charge relay system. Serine 378 bears the Phosphoserine mark. A glycan (N-linked (GlcNAc...) asparagine) is linked at asparagine 388. Residue histidine 466 is the Charge relay system of the active site. Asparagine 489 carries an N-linked (GlcNAc...) asparagine glycan.

The protein belongs to the type-B carboxylesterase/lipase family. Homotrimer and homohexamer. Binds to beta-glucuronidase. Detected in kidney, liver and lung.

It localises to the endoplasmic reticulum lumen. The protein localises to the cytoplasm. Its subcellular location is the lipid droplet. The catalysed reaction is a carboxylic ester + H2O = an alcohol + a carboxylate + H(+). It carries out the reaction cholesteryl (9Z-octadecenoate) + H2O = cholesterol + (9Z)-octadecenoate + H(+). The enzyme catalyses 2-(5Z,8Z,11Z,14Z-eicosatetraenoyl)-glycerol + H2O = glycerol + (5Z,8Z,11Z,14Z)-eicosatetraenoate + H(+). It catalyses the reaction prostaglandin E2 1-glyceryl ester + H2O = prostaglandin E2 + glycerol + H(+). The catalysed reaction is a cholesterol ester + H2O = cholesterol + a fatty acid + H(+). It carries out the reaction prostaglandin F2alpha 1-glyceryl ester + H2O = prostaglandin F2alpha + glycerol + H(+). In terms of biological role, involved in the detoxification of xenobiotics and in the activation of ester and amide prodrugs. Hydrolyzes aromatic and aliphatic esters, but has no catalytic activity toward amides or a fatty acyl-CoA ester. Displays fatty acid ethyl ester synthase activity, catalyzing the ethyl esterification of oleic acid to ethyloleate. Converts monoacylglycerides to free fatty acids and glycerol. Hydrolyzes of 2-arachidonoylglycerol and prostaglandins. Hydrolyzes cellular cholesteryl esters to free cholesterols and promotes reverse cholesterol transport (RCT) by facilitating both the initial and final steps in the process. First of all, allows free cholesterol efflux from macrophages to extracellular cholesterol acceptors and secondly, releases free cholesterol from lipoprotein-delivered cholesteryl esters in the liver for bile acid synthesis or direct secretion into the bile. The polypeptide is Liver carboxylesterase 1 (Mus musculus (Mouse)).